The sequence spans 653 residues: 23S rRNA 5-hydroxycytidine C2501 synthase (653 aa).

Belongs to the peptidase U32 family. In terms of assembly, interacts with precursors of the 50S ribosomal subunit.

Its activity is regulated as follows. Iron-sulfur clusters and prephenate are required for ho5C2501 formation. Responsible for the formation of the 5-hydroxycytidine modification at the C2501 position (ho5C2501) of 23S rRNA. May be a Fe-S protein that catalyzes ho5C2501 formation using prephenate as a hydroxyl group donor. This is 23S rRNA 5-hydroxycytidine C2501 synthase from Escherichia coli (strain K12).